The chain runs to 355 residues: Alpha-N-acetylneuraminide alpha-2,8-sialyltransferase (355 aa).

Topologically, residues 1–28 (MSPCGRALHTSRGAMAMLARKFPRTRLP) are cytoplasmic. Residues 29-47 (VGASALCVVVLCWLYIFPV) form a helical; Signal-anchor for type II membrane protein membrane-spanning segment. At 48 to 355 (YRLPNEKEIV…CEEPSPQPTS (308 aa)) the chain is on the lumenal side. N-linked (GlcNAc...) asparagine glycans are attached at residues asparagine 70 and asparagine 118. 2 cysteine pairs are disulfide-bonded: cysteine 137/cysteine 286 and cysteine 151/cysteine 346. The CMP-N-acetyl-beta-neuraminate site is built by asparagine 142 and asparagine 165. N-linked (GlcNAc...) asparagine glycans are attached at residues asparagine 213 and asparagine 244. CMP-N-acetyl-beta-neuraminate is bound by residues serine 273, threonine 274, glycine 275, tryptophan 295, and histidine 309. Residue histidine 321 is the Proton donor/acceptor of the active site.

The protein belongs to the glycosyltransferase 29 family.

Its subcellular location is the golgi apparatus membrane. It carries out the reaction an N-acetyl-alpha-neuraminyl-(2-&gt;3)-beta-D-galactosyl derivative + CMP-N-acetyl-beta-neuraminate = an N-acetyl-alpha-neuraminyl-(2-&gt;8)-N-acetyl-alpha-neuraminyl-(2-&gt;3)-beta-D-galactosyl derivative + CMP + H(+). The catalysed reaction is a ganglioside GM3 (d18:1(4E)) + CMP-N-acetyl-beta-neuraminate = a ganglioside GD3 (d18:1(4E)) + CMP + H(+). It catalyses the reaction a ganglioside GD3 (d18:1(4E)) + CMP-N-acetyl-beta-neuraminate = a ganglioside GT3 (d18:1(4E)) + CMP + H(+). The enzyme catalyses a ganglioside GD1a (d18:1(4E)) + CMP-N-acetyl-beta-neuraminate = a ganglioside GT1a (d18:1(4E)) + CMP + H(+). It carries out the reaction a ganglioside GT1b (d18:1(4E)) + CMP-N-acetyl-beta-neuraminate = a ganglioside GQ1b (d18:1(4E)) + CMP + H(+). The catalysed reaction is a ganglioside GM1b (d18:1(4E)) + CMP-N-acetyl-beta-neuraminate = a ganglioside GD1c (d18:1(4E)) + CMP + H(+). It catalyses the reaction a ganglioside GD3 + CMP-N-acetyl-beta-neuraminate = a ganglioside GT3 + CMP + H(+). The enzyme catalyses [alpha-N-acetylneuraminyl-(2-&gt;8)](n)-alpha-N-acetylneuraminyl-(2-&gt;8)-alpha-N-acetylneuraminyl-(2-&gt;3)-beta-D-galactosyl-(1-&gt;4)-beta-D-glucosyl-(1&lt;-&gt;1)-ceramide + CMP-N-acetyl-beta-neuraminate = [alpha-N-acetylneuraminyl-(2-&gt;8)](n+1)-alpha-N-acetylneuraminyl-(2-&gt;8)-alpha-N-acetylneuraminyl-(2-&gt;3)-beta-D-galactosyl-(1-&gt;4)-beta-D-glucosyl-(1&lt;-&gt;1)-ceramide + CMP + H(+). The protein operates within protein modification; protein glycosylation. Its pathway is lipid metabolism; sphingolipid metabolism. Functionally, catalyzes the addition of sialic acid in alpha 2,8-linkage to the sialic acid moiety of the ganglioside GM3 to form ganglioside GD3; gangliosides are a subfamily of complex glycosphingolipds that contain one or more residues of sialic acid. Can catalyze the addition of a second alpha-2,8- sialic acid to GD3 to form GT3. Can use GM1b, GD1a and GT1b as acceptor substrates to synthesize GD1c, GT1a and GQ1b respectively. This Mus musculus (Mouse) protein is Alpha-N-acetylneuraminide alpha-2,8-sialyltransferase.